Consider the following 654-residue polypeptide: DNA ligase (654 aa).

NAD(+) contacts are provided by residues 34 to 38 (DLEYD), 83 to 84 (SL), and E114. K116 serves as the catalytic N6-AMP-lysine intermediate. Positions 137, 171, 280, and 304 each coordinate NAD(+). The Zn(2+) site is built by C396, C399, C414, and C419. In terms of domain architecture, BRCT spans 577 to 654 (VISTILSGYT…EEQFYDLIKQ (78 aa)).

This sequence belongs to the NAD-dependent DNA ligase family. LigA subfamily. It depends on Mg(2+) as a cofactor. Requires Mn(2+) as cofactor.

The catalysed reaction is NAD(+) + (deoxyribonucleotide)n-3'-hydroxyl + 5'-phospho-(deoxyribonucleotide)m = (deoxyribonucleotide)n+m + AMP + beta-nicotinamide D-nucleotide.. Its function is as follows. DNA ligase that catalyzes the formation of phosphodiester linkages between 5'-phosphoryl and 3'-hydroxyl groups in double-stranded DNA using NAD as a coenzyme and as the energy source for the reaction. It is essential for DNA replication and repair of damaged DNA. This Mycoplasmopsis agalactiae (strain NCTC 10123 / CIP 59.7 / PG2) (Mycoplasma agalactiae) protein is DNA ligase.